We begin with the raw amino-acid sequence, 510 residues long: Ent-sandaracopimaradiene 3-hydroxylase (510 aa).

The helical transmembrane segment at M4–A24 threads the bilayer. C454 serves as a coordination point for heme.

This sequence belongs to the cytochrome P450 family. In terms of assembly, interacts with the rice dwarf virus (RDV) P2 protein. Heme serves as cofactor. As to expression, expressed in leaf blades and sheaths, stems and panicles.

The protein localises to the membrane. The enzyme catalyses ent-sandaracopimara-8(14),15-diene + reduced [NADPH--hemoprotein reductase] + O2 = ent-sandaracopimaradien-3beta-ol + oxidized [NADPH--hemoprotein reductase] + H2O + H(+). The catalysed reaction is 9beta-pimara-7,15-diene + reduced [NADPH--hemoprotein reductase] + O2 = 9beta-pimara-7,15-diene-3beta-ol + oxidized [NADPH--hemoprotein reductase] + H2O + H(+). In terms of biological role, catalyzes the hydroxylation of ent-sandaracopimaradiene at the C3alpha position to produce ent-3beta-hydroxy-sandaracopimaradiene, an intermediates for the biosynthesis of oryzalexin D and oryzalexin E phytoalexins. Catalyzes the hydroxylation of ent-cassadiene at the C3alpha position to produce 3alpha-hydroxy-ent-cassadiene, which may be an intermediate for the biosynthesis of phytocassane phytoalexins. Catalyzes the hydroxylation of syn-pimaradiene (9-beta-pimara-7,15-diene) at the C3beta position to produce 3-beta-syn-pimaradiene. Can hydroxylate ent-kaurene in vitro, but the product is not ent-kauren-19-ol as expected for ent-kaurene oxidase activity. This chain is Ent-sandaracopimaradiene 3-hydroxylase, found in Oryza sativa subsp. japonica (Rice).